The chain runs to 224 residues: Transposase for insertion sequence element IS257 in transposon Tn4003 (224 aa).

A DNA-binding region (H-T-H motif) is located at residues 33–52; it reads EILRGRGVNVHHSTVYRWVQ. The Integrase catalytic domain occupies 73-222; the sequence is WRIDETYIKI…SPCHEISIML (150 aa).

In terms of biological role, involved in the transposition of the insertion sequence. In Staphylococcus aureus, this protein is Transposase for insertion sequence element IS257 in transposon Tn4003.